Reading from the N-terminus, the 723-residue chain is Polyribonucleotide nucleotidyltransferase (723 aa).

Mg(2+) is bound by residues aspartate 488 and aspartate 494. One can recognise a KH domain in the interval 555-614; that stretch reads PKIITLNIKPEKIKDVIGPGGKQINAIIDETGVKIDIEQDGTVYIASQDQAMNRKAIAII. Residues 624-692 form the S1 motif domain; it reads GEVYTGKVRR…QQGRVNLSRK (69 aa). The interval 692–723 is disordered; sequence KALLEKKEQPEGDKKPQAEKKFYPKTKKPESK. The span at 693-723 shows a compositional bias: basic and acidic residues; it reads ALLEKKEQPEGDKKPQAEKKFYPKTKKPESK.

This sequence belongs to the polyribonucleotide nucleotidyltransferase family. Requires Mg(2+) as cofactor.

The protein resides in the cytoplasm. It catalyses the reaction RNA(n+1) + phosphate = RNA(n) + a ribonucleoside 5'-diphosphate. Functionally, involved in mRNA degradation. Catalyzes the phosphorolysis of single-stranded polyribonucleotides processively in the 3'- to 5'-direction. This Listeria monocytogenes serotype 4a (strain HCC23) protein is Polyribonucleotide nucleotidyltransferase.